An 823-amino-acid polypeptide reads, in one-letter code: Kinesin-like protein KIN-7N (823 aa).

The 323-residue stretch at 3–325 folds into the Kinesin motor domain; it reads KICVAVRVRP…LQFASRAKRI (323 aa). Residue 83 to 90 participates in ATP binding; sequence GQTSSGKT. Coiled coils occupy residues 341–414, 527–557, and 696–786; these read LKRQ…NLNN, RENHSEVEDLKSRIQLLTNENDSLQVKFNEQ, and EKKL…MEEE.

It belongs to the TRAFAC class myosin-kinesin ATPase superfamily. Kinesin family. KIN-7 subfamily.

This is Kinesin-like protein KIN-7N from Arabidopsis thaliana (Mouse-ear cress).